Here is a 214-residue protein sequence, read N- to C-terminus: MLTVALPKGELLKNSIRLLQSVGLDFSAFLDSGNRQLQITDASGTAKGLLVRGQDVPVYVEYGQAQIGIIGYDVLREKQPQVAHLVDLQFGYCRMSVAVKASSPYKSPLDLPAHSRVASKYVNSAREFFQGLDLPVEIVPLYGSVELGPITGMSEAIVDIVSTGRTLKENGLVEITTLYESTARLIAHPLSYRLNTGNLHQLVEQLREGALTKV.

It belongs to the ATP phosphoribosyltransferase family. Short subfamily. In terms of assembly, heteromultimer composed of HisG and HisZ subunits.

It localises to the cytoplasm. The enzyme catalyses 1-(5-phospho-beta-D-ribosyl)-ATP + diphosphate = 5-phospho-alpha-D-ribose 1-diphosphate + ATP. The protein operates within amino-acid biosynthesis; L-histidine biosynthesis; L-histidine from 5-phospho-alpha-D-ribose 1-diphosphate: step 1/9. Catalyzes the condensation of ATP and 5-phosphoribose 1-diphosphate to form N'-(5'-phosphoribosyl)-ATP (PR-ATP). Has a crucial role in the pathway because the rate of histidine biosynthesis seems to be controlled primarily by regulation of HisG enzymatic activity. The sequence is that of ATP phosphoribosyltransferase (hisG) from Nostoc sp. (strain PCC 7120 / SAG 25.82 / UTEX 2576).